We begin with the raw amino-acid sequence, 463 residues long: Aromatic amino acid transport protein AroP (463 aa).

The next 12 membrane-spanning stretches (helical) occupy residues 18 to 38 (TMMGLGSAIGAGLFLGTGVGI), 40 to 60 (AAGPAVLLAYIIAGAIVVLVM), 84 to 104 (FGHWAGFSLGWLYWFMLIMVM), 117 to 137 (AWFGVEPWIPSLVCVVFFAVV), 157 to 177 (VAVIIAFLIIGIALIFGWLPG), 200 to 220 (VAAGLLAVAFAFGGIEIVTIA), 237 to 257 (AVIWRISVFYLGSVLVITFLM), 276 to 296 (ILAMANIPGTVGFMEAIIVLA), 337 to 357 (AVLLSMFFAFVSVGLQYWNPA), 358 to 378 (GLLDFLLNAVGGCLIVVWAMI), 402 to 422 (AHPWLGILTLVLLAGLVALML), and 431 to 451 (VYSVAIVYGFLVLLSFVTVNS).

The protein belongs to the amino acid-polyamine-organocation (APC) superfamily. Amino acid transporter (AAT) (TC 2.A.3.1) family.

The protein localises to the cell membrane. It catalyses the reaction L-phenylalanine(in) + H(+)(in) = L-phenylalanine(out) + H(+)(out). The enzyme catalyses L-tryptophan(in) + H(+)(in) = L-tryptophan(out) + H(+)(out). The catalysed reaction is L-tyrosine(in) + H(+)(in) = L-tyrosine(out) + H(+)(out). Functionally, permease that is involved in the active transport across the cytoplasmic membrane of all three aromatic amino acids, phenylalanine, tyrosine and tryptophan. The sequence is that of Aromatic amino acid transport protein AroP from Corynebacterium glutamicum (strain ATCC 13032 / DSM 20300 / JCM 1318 / BCRC 11384 / CCUG 27702 / LMG 3730 / NBRC 12168 / NCIMB 10025 / NRRL B-2784 / 534).